Here is a 42-residue protein sequence, read N- to C-terminus: Photosystem II reaction center protein J (42 aa).

Residues 12 to 32 form a helical membrane-spanning segment; it reads LWFVGMIVGLAALGLLGIFFY.

Belongs to the PsbJ family. PSII is composed of 1 copy each of membrane proteins PsbA, PsbB, PsbC, PsbD, PsbE, PsbF, PsbH, PsbI, PsbJ, PsbK, PsbL, PsbM, PsbT, PsbX, PsbY, PsbZ, Psb30/Ycf12, at least 3 peripheral proteins of the oxygen-evolving complex and a large number of cofactors. It forms dimeric complexes.

The protein localises to the plastid. The protein resides in the chloroplast thylakoid membrane. Functionally, one of the components of the core complex of photosystem II (PSII). PSII is a light-driven water:plastoquinone oxidoreductase that uses light energy to abstract electrons from H(2)O, generating O(2) and a proton gradient subsequently used for ATP formation. It consists of a core antenna complex that captures photons, and an electron transfer chain that converts photonic excitation into a charge separation. In Nephroselmis olivacea (Green alga), this protein is Photosystem II reaction center protein J.